The primary structure comprises 386 residues: Patatin-T5 (386 aa).

The signal sequence occupies residues 1–23 (MATTNSFTILIFMILATTSSTFA). The 198-residue stretch at 32-229 (LSIDGGGIKG…TVDDPALLSI (198 aa)) folds into the PNPLA domain. The GXGXXG motif lies at 36-41 (GGGIKG). Residue N60 is glycosylated (N-linked (GlcNAc...) asparagine). The GXSXG signature appears at 75–79 (GTSTG). S77 acts as the Nucleophile in catalysis. N-linked (GlcNAc...) asparagine glycosylation is found at N90 and N202. D215 (proton acceptor) is an active-site residue. The DGA/G motif lies at 215–217 (DGA).

This sequence belongs to the patatin family. Post-translationally, N-glycosylated. As to expression, tuber and stolon.

The protein resides in the vacuole. Probable lipolytic acyl hydrolase (LAH), an activity which is thought to be involved in the response of tubers to pathogens. The protein is Patatin-T5 of Solanum tuberosum (Potato).